A 319-amino-acid polypeptide reads, in one-letter code: Transcription initiation factor IIB 6 (319 aa).

The span at 1 to 16 (MTDARMRSREQERTDE) shows a compositional bias: basic and acidic residues. The segment at 1–33 (MTDARMRSREQERTDETESESTDGCPECGGLVV) is disordered. The TFIIB-type zinc finger occupies 21 to 51 (STDGCPECGGLVVNDEEHGESVCADCGLVVE). Residues cysteine 25, cysteine 28, cysteine 43, and cysteine 46 each coordinate Zn(2+). Over residues 59 to 74 (PEWRAFDSKEKDEKSR) the composition is skewed to basic and acidic residues. Residues 59-89 (PEWRAFDSKEKDEKSRVGAPTTNTMHDKGLS) are disordered. 2 repeat units span residues 137–220 (GEID…VREL) and 231–312 (SYVP…ELLE).

Belongs to the TFIIB family.

Functionally, stabilizes TBP binding to an archaeal box-A promoter. Also responsible for recruiting RNA polymerase II to the pre-initiation complex (DNA-TBP-TFIIB). The polypeptide is Transcription initiation factor IIB 6 (Halobacterium salinarum (strain ATCC 700922 / JCM 11081 / NRC-1) (Halobacterium halobium)).